Reading from the N-terminus, the 295-residue chain is uncharacterized protein (295 aa).

The region spanning 1–58 (MESGDLRVFQMVAREGTITKAALQLGYVQSNVTARIQQLEAELGTTLFLRHNRGMTLS) is the HTH lysR-type domain. The segment at residues 18–37 (ITKAALQLGYVQSNVTARIQ) is a DNA-binding region (H-T-H motif).

Belongs to the LysR transcriptional regulatory family.

This is an uncharacterized protein from Bacillus subtilis (strain 168).